A 308-amino-acid chain; its full sequence is Glutaminase 1 (308 aa).

Residues S64, N116, E161, N168, Y192, Y244, and V262 each contribute to the substrate site.

The protein belongs to the glutaminase family. In terms of assembly, homotetramer.

It carries out the reaction L-glutamine + H2O = L-glutamate + NH4(+). In Halalkalibacterium halodurans (strain ATCC BAA-125 / DSM 18197 / FERM 7344 / JCM 9153 / C-125) (Bacillus halodurans), this protein is Glutaminase 1.